The primary structure comprises 312 residues: Elongation factor Ts, mitochondrial (312 aa).

This sequence belongs to the EF-Ts family.

It is found in the mitochondrion. Its function is as follows. Associates with the EF-Tu.GDP complex and induces the exchange of GDP to GTP. It remains bound to the aminoacyl-tRNA.EF-Tu.GTP complex up to the GTP hydrolysis stage on the ribosome. This is Elongation factor Ts, mitochondrial (tsfm) from Xenopus laevis (African clawed frog).